Consider the following 970-residue polypeptide: Bifunctional glutamine synthetase adenylyltransferase/adenylyl-removing enzyme (970 aa).

The segment at 1–454 (MNSLPPRPSL…HFQQVFAAPQ (454 aa)) is adenylyl removase. The segment at 468-970 (QAVLASIWAG…WRRVMEEGKA (503 aa)) is adenylyl transferase.

The protein belongs to the GlnE family. The cofactor is Mg(2+).

It carries out the reaction [glutamine synthetase]-O(4)-(5'-adenylyl)-L-tyrosine + phosphate = [glutamine synthetase]-L-tyrosine + ADP. The catalysed reaction is [glutamine synthetase]-L-tyrosine + ATP = [glutamine synthetase]-O(4)-(5'-adenylyl)-L-tyrosine + diphosphate. Its function is as follows. Involved in the regulation of glutamine synthetase GlnA, a key enzyme in the process to assimilate ammonia. When cellular nitrogen levels are high, the C-terminal adenylyl transferase (AT) inactivates GlnA by covalent transfer of an adenylyl group from ATP to specific tyrosine residue of GlnA, thus reducing its activity. Conversely, when nitrogen levels are low, the N-terminal adenylyl removase (AR) activates GlnA by removing the adenylyl group by phosphorolysis, increasing its activity. The regulatory region of GlnE binds the signal transduction protein PII (GlnB) which indicates the nitrogen status of the cell. This Thioalkalivibrio sulfidiphilus (strain HL-EbGR7) protein is Bifunctional glutamine synthetase adenylyltransferase/adenylyl-removing enzyme.